The primary structure comprises 558 residues: Inositol-3-phosphate synthase 1 (558 aa).

NAD(+)-binding residues include Gly67, Gly68, Asn69, Asn70, Asp141, Ser177, Val178, Gln188, Arg191, Thr228, Ala229, Asn230, Thr231, Gly278, Ser279, Asp303, Ser306, Asn337, Asn338, Asp339, and Lys352. Ser279 carries the phosphoserine modification. The residue at position 357 (Ser357) is a Phosphoserine. Residues Gly390, Asp391, Asp419, and Ser420 each coordinate NAD(+). Residues 537 to 558 form a disordered region; sequence ATNGCTGDANGHLQEEPPMPTT.

It belongs to the myo-inositol 1-phosphate synthase family. Requires NAD(+) as cofactor. Phosphorylation at Ser-279 and Ser-357 may be associated with a decrease in activity. Highly expressed in testis, ovary, heart, placenta and pancreas. Weakly expressed in blood leukocyte, thymus, skeletal muscle and colon.

The protein localises to the cytoplasm. It catalyses the reaction D-glucose 6-phosphate = 1D-myo-inositol 3-phosphate. It participates in polyol metabolism; myo-inositol biosynthesis; myo-inositol from D-glucose 6-phosphate: step 1/2. With respect to regulation, inhibited by mood-stabilizing drugs such as valproate (VPA) and lithium. Key enzyme in myo-inositol biosynthesis pathway that catalyzes the conversion of glucose 6-phosphate to 1-myo-inositol 1-phosphate in a NAD-dependent manner. Rate-limiting enzyme in the synthesis of all inositol-containing compounds. The protein is Inositol-3-phosphate synthase 1 (ISYNA1) of Homo sapiens (Human).